The sequence spans 261 residues: Acyl-[acyl-carrier-protein]--UDP-N-acetylglucosamine O-acyltransferase (261 aa).

Belongs to the transferase hexapeptide repeat family. LpxA subfamily. In terms of assembly, homotrimer.

The protein localises to the cytoplasm. It catalyses the reaction a (3R)-hydroxyacyl-[ACP] + UDP-N-acetyl-alpha-D-glucosamine = a UDP-3-O-[(3R)-3-hydroxyacyl]-N-acetyl-alpha-D-glucosamine + holo-[ACP]. The protein operates within glycolipid biosynthesis; lipid IV(A) biosynthesis; lipid IV(A) from (3R)-3-hydroxytetradecanoyl-[acyl-carrier-protein] and UDP-N-acetyl-alpha-D-glucosamine: step 1/6. In terms of biological role, involved in the biosynthesis of lipid A, a phosphorylated glycolipid that anchors the lipopolysaccharide to the outer membrane of the cell. In Paracoccus denitrificans (strain Pd 1222), this protein is Acyl-[acyl-carrier-protein]--UDP-N-acetylglucosamine O-acyltransferase.